A 513-amino-acid chain; its full sequence is DNA damage-binding protein CMR1 (513 aa).

Residues 35 to 45 show a composition bias toward basic and acidic residues; the sequence is RSEAGIEDHRK. Residues 35 to 103 are disordered; the sequence is RSEAGIEDHR…TAQNVKQEEE (69 aa). WD repeat units follow at residues 183 to 224, 237 to 277, 329 to 369, 386 to 425, 438 to 477, and 478 to 513; these read IVHE…PDPE, LFSR…SDEL, LSDK…AKPD, NSRLSVSAVSYAPIDHTLVCNGYDNTVRLFNARADLPSEL, GRWVSVLKARFKLNMDVFAIANMKRAIDIYTSRGEQLSHL, and ETSTVPAVVSWHPMQNWIVGGNNSGKVFLFTDAPQE.

Belongs to the WD repeat DDB2/WDR76 family.

In terms of biological role, DNA-binding protein that binds to both single- and double-stranded DNA. Binds preferentially to UV-damaged DNA. May be involved in DNA-metabolic processes. In Eremothecium gossypii (strain ATCC 10895 / CBS 109.51 / FGSC 9923 / NRRL Y-1056) (Yeast), this protein is DNA damage-binding protein CMR1.